Here is a 434-residue protein sequence, read N- to C-terminus: Enolase (434 aa).

Q163 lines the (2R)-2-phosphoglycerate pocket. The active-site Proton donor is E205. 3 residues coordinate Mg(2+): D242, E291, and D318. (2R)-2-phosphoglycerate-binding residues include K343, R372, S373, and K394. Catalysis depends on K343, which acts as the Proton acceptor.

Belongs to the enolase family. Requires Mg(2+) as cofactor.

It localises to the cytoplasm. The protein resides in the secreted. The protein localises to the cell surface. The enzyme catalyses (2R)-2-phosphoglycerate = phosphoenolpyruvate + H2O. It participates in carbohydrate degradation; glycolysis; pyruvate from D-glyceraldehyde 3-phosphate: step 4/5. Catalyzes the reversible conversion of 2-phosphoglycerate (2-PG) into phosphoenolpyruvate (PEP). It is essential for the degradation of carbohydrates via glycolysis. The polypeptide is Enolase (Streptococcus sanguinis (strain SK36)).